The sequence spans 208 residues: EF-hand protein 5 variant 1 (208 aa).

Residues 1–34 (MQARGTVKVQGDAKVDGKMSTGQHSHHQHLNSTQ) form a disordered region. EF-hand domains follow at residues 64–98 (MAEGFYVLSGGYKKLFIPSKDVYALMQNVGMHLTE), 99–134 (EEFHDALRVIGQSEPQNADELSFSDFLLLMTREVDD), 135–170 (TMADELRSAFFHYDKYKTGYVTRKQFTELFATLGER), and 171–206 (STPEELEELLAVAEVDETDDKIDYNRFVNELTSRVN). 5 residues coordinate Ca(2+): Glu-118, Asp-123, Asp-148, Thr-152, and Tyr-154.

This is EF-hand protein 5 variant 1 from Trypanosoma cruzi.